We begin with the raw amino-acid sequence, 54 residues long: Large ribosomal subunit protein bL33 (54 aa).

It belongs to the bacterial ribosomal protein bL33 family.

This Petrotoga mobilis (strain DSM 10674 / SJ95) protein is Large ribosomal subunit protein bL33.